The following is a 440-amino-acid chain: Streptokinase A (440 aa).

An N-terminal signal peptide occupies residues 1–26 (MKNYLSIGVIALLFALTFGTVKSVQA).

Its function is as follows. This protein is not a protease, but it activates plasminogen by complexing with it. As a potential virulence factor, it is thought to prevent the formation of effective fibrin barriers around the site of infection, thereby contributing to the invasiveness of the cells. The polypeptide is Streptokinase A (ska) (Streptococcus pyogenes serotype M1).